The chain runs to 818 residues: Elongation factor G, mitochondrial (818 aa).

The transit peptide at 1–23 (MFLGRAASRTCRHSQPLRVAARA) directs the protein to the mitochondrion. The tract at residues 67–96 (MASTATATKPTEEASSSDQPPAPAHKLTDN) is disordered. Residues 69 to 85 (STATATKPTEEASSSDQ) show a composition bias toward polar residues. The region spanning 102-390 (TFQRNIGISA…GVCEYLPNPS (289 aa)) is the tr-type G domain. Residues 111–118 (AHIDSGKT), 188–192 (DTPGH), and 242–245 (NKMD) each bind GTP.

Belongs to the TRAFAC class translation factor GTPase superfamily. Classic translation factor GTPase family. EF-G/EF-2 subfamily.

Its subcellular location is the mitochondrion. The protein operates within protein biosynthesis; polypeptide chain elongation. Mitochondrial GTPase that catalyzes the GTP-dependent ribosomal translocation step during translation elongation. During this step, the ribosome changes from the pre-translocational (PRE) to the post-translocational (POST) state as the newly formed A-site-bound peptidyl-tRNA and P-site-bound deacylated tRNA move to the P and E sites, respectively. Catalyzes the coordinated movement of the two tRNA molecules, the mRNA and conformational changes in the ribosome. This chain is Elongation factor G, mitochondrial, found in Coprinopsis cinerea (strain Okayama-7 / 130 / ATCC MYA-4618 / FGSC 9003) (Inky cap fungus).